The primary structure comprises 462 residues: 2-amino-5-chloromuconic acid deaminase (462 aa).

Active-site charge relay system residues include K79 and S156. The Acyl-ester intermediate role is filled by S180.

This sequence belongs to the amidase family.

The enzyme catalyses (2Z,4E)-2-aminomuconate + H2O = (3E)-2-oxohex-3-enedioate + NH4(+). Its pathway is xenobiotic degradation; nitrobenzene degradation. The protein operates within xenobiotic degradation; 4-chloronitrobenzene degradation. Functionally, involved in the biodegradation of nitroaromatic and chlorinated nitroaromatic compounds. Catalyzes the conversion of 2-amino-5-chloromuconic acid into 2-hydroxy-5-chloromuconic acid and ammonia. Also able to catalyze the transformation of 2-aminomuconic acid into 2-hydroxymuconic acid. The sequence is that of 2-amino-5-chloromuconic acid deaminase from Comamonas testosteroni (Pseudomonas testosteroni).